Reading from the N-terminus, the 224-residue chain is Heme response regulator HssR (224 aa).

The Response regulatory domain maps to glutamine 3–leucine 116. A 4-aspartylphosphate modification is found at aspartate 52. The segment at residues asparagine 124–asparagine 222 is a DNA-binding region (ompR/PhoB-type).

Phosphorylated by HssS.

It localises to the cytoplasm. In terms of biological role, member of the two-component regulatory system HssS/HssR involved in intracellular heme homeostasis and tempering of staphylococcal virulence. Phosphorylated HssR binds to a direct repeat sequence within hrtAB promoter and activates the expression of hrtAB, an efflux pump, in response to extracellular heme, hemin, hemoglobin or blood. This chain is Heme response regulator HssR (hssR), found in Staphylococcus aureus (strain Mu50 / ATCC 700699).